The primary structure comprises 288 residues: ATP synthase gamma chain (288 aa).

It belongs to the ATPase gamma chain family. In terms of assembly, F-type ATPases have 2 components, CF(1) - the catalytic core - and CF(0) - the membrane proton channel. CF(1) has five subunits: alpha(3), beta(3), gamma(1), delta(1), epsilon(1). CF(0) has three main subunits: a, b and c.

It localises to the cell inner membrane. In terms of biological role, produces ATP from ADP in the presence of a proton gradient across the membrane. The gamma chain is believed to be important in regulating ATPase activity and the flow of protons through the CF(0) complex. The polypeptide is ATP synthase gamma chain (Stutzerimonas stutzeri (strain A1501) (Pseudomonas stutzeri)).